The following is a 323-amino-acid chain: GILT-like protein C02D5.2 (323 aa).

The helical transmembrane segment at Leu13 to Ile32 threads the bilayer. Asn35 carries an N-linked (GlcNAc...) asparagine glycan. 2 helical membrane-spanning segments follow: residues Ser37 to Leu59 and Tyr87 to Leu104. Residue Asn289 is glycosylated (N-linked (GlcNAc...) asparagine).

This sequence belongs to the GILT family.

The protein localises to the membrane. This Caenorhabditis elegans protein is GILT-like protein C02D5.2.